The primary structure comprises 388 residues: S-adenosylmethionine synthase (388 aa).

His-17 contributes to the ATP binding site. Asp-19 contacts Mg(2+). Position 45 (Glu-45) interacts with K(+). The L-methionine site is built by Glu-58 and Gln-106. The tract at residues 106 to 116 (QSAHISQGVDR) is flexible loop. ATP contacts are provided by residues 166-168 (DAK), Asp-241, 247-248 (RK), Ala-264, and Lys-268. Asp-241 is a binding site for L-methionine. Lys-272 contributes to the L-methionine binding site.

This sequence belongs to the AdoMet synthase family. In terms of assembly, homotetramer; dimer of dimers. Mg(2+) serves as cofactor. K(+) is required as a cofactor.

Its subcellular location is the cytoplasm. It catalyses the reaction L-methionine + ATP + H2O = S-adenosyl-L-methionine + phosphate + diphosphate. It functions in the pathway amino-acid biosynthesis; S-adenosyl-L-methionine biosynthesis; S-adenosyl-L-methionine from L-methionine: step 1/1. Catalyzes the formation of S-adenosylmethionine (AdoMet) from methionine and ATP. The overall synthetic reaction is composed of two sequential steps, AdoMet formation and the subsequent tripolyphosphate hydrolysis which occurs prior to release of AdoMet from the enzyme. The polypeptide is S-adenosylmethionine synthase (Paracoccus denitrificans (strain Pd 1222)).